A 110-amino-acid chain; its full sequence is Protein C-ets-2 (110 aa).

Residues 1–84 (SGPIQLWQFL…AGKRYVYRFV (84 aa)) constitute a DNA-binding region (ETS).

Belongs to the ETS family.

The protein localises to the nucleus. In terms of biological role, probable transcription factor. The polypeptide is Protein C-ets-2 (ETS-2) (Lytechinus variegatus (Green sea urchin)).